Here is a 305-residue protein sequence, read N- to C-terminus: Protoheme IX farnesyltransferase 1 (305 aa).

9 consecutive transmembrane segments (helical) span residues 30-50, 59-79, 108-128, 129-149, 154-176, 180-202, 232-252, 253-273, and 284-304; these read IGIV…AFQF, LDVI…SGAM, FVLT…FAAS, FAAG…YSMW, HVSN…FAAV, LGPG…FYAL, LFWI…GIGF, LTLA…GFTA, and FIYS…FAVF.

This sequence belongs to the UbiA prenyltransferase family. Protoheme IX farnesyltransferase subfamily. In terms of assembly, interacts with CtaA.

The protein resides in the cell membrane. It carries out the reaction heme b + (2E,6E)-farnesyl diphosphate + H2O = Fe(II)-heme o + diphosphate. It participates in porphyrin-containing compound metabolism; heme O biosynthesis; heme O from protoheme: step 1/1. In terms of biological role, converts heme B (protoheme IX) to heme O by substitution of the vinyl group on carbon 2 of heme B porphyrin ring with a hydroxyethyl farnesyl side group. The polypeptide is Protoheme IX farnesyltransferase 1 (Lysinibacillus sphaericus (strain C3-41)).